The chain runs to 493 residues: Farnesoate epoxidase (493 aa).

Residues 1 to 24 (MLALIVLCFILFFYIISRRHRGLC) form the signal peptide. Cys-433 is a heme binding site.

The protein belongs to the cytochrome P450 family. Heme is required as a cofactor. In terms of tissue distribution, constitutively expressed in corpora allata from the first instar larval to adult stages.

The enzyme catalyses (2E,6E)-farnesoate + reduced [NADPH--hemoprotein reductase] + O2 = juvenile hormone III carboxylate + oxidized [NADPH--hemoprotein reductase] + H2O + H(+). Functionally, catalyzes the conversion of farnesoate to juvenile hormone III acid in juvenile hormone biosynthesis. The polypeptide is Farnesoate epoxidase (Bombyx mori (Silk moth)).